Here is a 310-residue protein sequence, read N- to C-terminus: Inorganic pyrophosphatase, mitochondrial (310 aa).

Residues methionine 1 to asparagine 30 constitute a mitochondrion transit peptide. Mg(2+) contacts are provided by aspartate 152, aspartate 157, and aspartate 189.

It belongs to the PPase family. As to quaternary structure, homodimer that binds non-covalently to a protein complex in the inner mitochondrial membrane. The cofactor is Mg(2+).

It localises to the mitochondrion. The catalysed reaction is diphosphate + H2O = 2 phosphate + H(+). In terms of biological role, involved in energy production. Its activity is stimulated by uncouplers of ATP synthesis. In Saccharomyces cerevisiae (strain ATCC 204508 / S288c) (Baker's yeast), this protein is Inorganic pyrophosphatase, mitochondrial (PPA2).